We begin with the raw amino-acid sequence, 364 residues long: Zinc finger protein CONSTANS-LIKE 12 (364 aa).

Residues Cys5, Cys8, Cys28, and His33 each contribute to the Zn(2+) site. The B box-type 1; atypical zinc-finger motif lies at 5-47 (CDHCATSQALIYCKSDLAKLCLNCDVHVHSANPLSHRHIRSLI). The B box-type 2; degenerate zinc finger occupies 48–88 (CEKCFSQPAAIRCLDEKVSYCQGCHWHESNCSELGHRVQSL). The CCT domain maps to 280-322 (QDCGMSPGFIMSEAPWETNFEVSCPQARNEAKLRYKEKKLKRS).

This sequence belongs to the CONSTANS family.

The protein resides in the nucleus. In Arabidopsis thaliana (Mouse-ear cress), this protein is Zinc finger protein CONSTANS-LIKE 12 (COL12).